Reading from the N-terminus, the 467-residue chain is Neurexin-1-beta (467 aa).

A signal peptide spans 1 to 45 (MYQRMLRCGAELGSPGGGGGGAGGRLALLWIVPLTLSGLLGVAWG). Over 46-391 (ASSLGAHHIH…EVIRESSSTT (346 aa)) the chain is Extracellular. One can recognise a Laminin G-like domain in the interval 86-284 (YIFSKGGGQI…DANIAIVGNV (199 aa)). Ca(2+) contacts are provided by Asp-136 and Val-153. An N-linked (GlcNAc...) asparagine glycan is attached at Asn-183. The tract at residues 200–229 (GNNDNERLAIARQRIPYRLGRVVDEWLLDK) is essential for interaction with CBLN1; modulates interaction affinity with NLGN1, NLGN2 and NLGN3; prevents interaction with DAG1/alpha-dystroglycan; modulates interaction with alpha-latrotoxin. Ca(2+) contacts are provided by Ile-235 and Asn-237. A disordered region spans residues 318-380 (LATSTARRGN…AGGREPYPGS (63 aa)). The segment covering 324–339 (RRGNSPTKEPVSQTTD) has biased composition (polar residues). A glycan (O-linked (Xyl...) (heparan sulfate) serine) is linked at Ser-345. Residues 392 to 412 (GMVVGIVAAAALCILILLYAM) form a helical membrane-spanning segment. Residues 413-467 (YKYRNRDEGSYHVDESRNYISNSAQSNGAVVKEKQPSSAKSANKNKKNKDKEYYV) lie on the Cytoplasmic side of the membrane. Residues 434-467 (NSAQSNGAVVKEKQPSSAKSANKNKKNKDKEYYV) form a disordered region. Ser-449, Ser-450, and Ser-453 each carry phosphoserine.

The protein belongs to the neurexin family. In terms of assembly, the cytoplasmic C-terminal region binds to CASK. Binds NLGN1, NLGN2 and NLGN3, DAG1 (alpha-dystroglycan) and alpha-latrotoxin. Binding to neuroligins is calcium-dependent, and the binding preference ranks as follow: NLGN1 &gt; NLGN4 &gt;&gt; NLGN3 &gt; NLGN2. Interacts with CBLN2 and more weakly with CBLN4. Interacts with CBLN1; interaction is CBLN1 hexamer form-dependent; CBLN1-binding is calcium-independent; isoform 1b does not interact with CBLN1. Interacts with CLSTN3. Post-translationally, O-glycosylated; contains heparan sulfate. Heparan sulfate attachment is required for synapse development by mediating interactions with neuroligins.

The protein localises to the presynaptic cell membrane. Its function is as follows. Neuronal cell surface protein involved in cell recognition and cell adhesion by forming intracellular junctions through binding to neuroligins. Plays a role in formation of synaptic junctions. Functions as part of a trans-synaptic complex by binding to cerebellins and postsynaptic GRID1. This interaction helps regulate the activity of NMDA and AMPA receptors at hippocampal synapses without affecting synapse formation. NRXN1B-CBLN2-GRID1 complex transduce presynaptic signals into postsynaptic NMDAR response. The polypeptide is Neurexin-1-beta (Bos taurus (Bovine)).